The primary structure comprises 902 residues: Chitin synthase 3 (902 aa).

Positions 1-15 are enriched in basic and acidic residues; it reads MAYNRLDDDYFDNRR. Residues 1 to 68 form a disordered region; the sequence is MAYNRLDDDY…MGPGRHTPSD (68 aa). The span at 19–30 shows a compositional bias: pro residues; that stretch reads NRPPPHRTPSPG. N-linked (GlcNAc...) asparagine glycosylation is present at Asn80. The interval 104–161 is disordered; it reads HHDAYYNPTYTPTPNEAQTPYGEPGYEHDGRPLLPQQDSYGQYSDNPQQQQQQQGGLK. Polar residues-rich tracts occupy residues 111-121 and 139-150; these read PTYTPTPNEAQ and QQDSYGQYSDNP. 9 helical membrane passes run 449–469, 547–567, 577–597, 623–643, 656–676, 699–719, 731–751, 830–850, and 874–894; these read SAFG…YIAL, RWLN…YQFF, IAFF…WFAI, ILGV…FVLA, LAMI…AVFI, VVVT…VASL, LVQY…YAFC, VVVL…LSTA, and VVLY…MWFL.

The protein belongs to the chitin synthase family. Class II subfamily.

It is found in the cell membrane. The enzyme catalyses [(1-&gt;4)-N-acetyl-beta-D-glucosaminyl](n) + UDP-N-acetyl-alpha-D-glucosamine = [(1-&gt;4)-N-acetyl-beta-D-glucosaminyl](n+1) + UDP + H(+). Functionally, polymerizes chitin, a structural polymer of the cell wall and septum, by transferring the sugar moiety of UDP-GlcNAc to the non-reducing end of the growing chitin polymer. CHS1 and CHS3 have compensatory functions in cell wall modifications in responses to stresses. Might function as a negative regulator on expression of other CHS genes. The protein is Chitin synthase 3 of Pyricularia oryzae (strain 70-15 / ATCC MYA-4617 / FGSC 8958) (Rice blast fungus).